Here is a 234-residue protein sequence, read N- to C-terminus: Filarial antigen Av33 (234 aa).

A signal peptide spans Met1–Gly17. Cys135 and Cys230 form a disulfide bridge. Residues Thr204–Tyr234 form a disordered region. The span at Thr211–Pro220 shows a compositional bias: low complexity.

It belongs to the protease inhibitor I33 family.

It localises to the secreted. Aspartyl protease inhibitor. In Acanthocheilonema viteae (Filarial nematode worm), this protein is Filarial antigen Av33.